We begin with the raw amino-acid sequence, 377 residues long: GTP 3',8-cyclase (377 aa).

The interval Met1–His29 is disordered. The region spanning Arg45 to Arg271 is the Radical SAM core domain. Arg54 is a GTP binding site. 2 residues coordinate [4Fe-4S] cluster: Cys61 and Cys65. Residue Tyr67 coordinates S-adenosyl-L-methionine. A [4Fe-4S] cluster-binding site is contributed by Cys68. Arg105 contacts GTP. Gly109 is a binding site for S-adenosyl-L-methionine. A GTP-binding site is contributed by Thr140. Ser164 lines the S-adenosyl-L-methionine pocket. Position 201 (Lys201) interacts with GTP. Residue Met235 participates in S-adenosyl-L-methionine binding. [4Fe-4S] cluster contacts are provided by Cys304 and Cys307. Arg309–Arg311 is a GTP binding site. Cys321 is a [4Fe-4S] cluster binding site.

Belongs to the radical SAM superfamily. MoaA family. Monomer and homodimer. [4Fe-4S] cluster serves as cofactor.

It carries out the reaction GTP + AH2 + S-adenosyl-L-methionine = (8S)-3',8-cyclo-7,8-dihydroguanosine 5'-triphosphate + 5'-deoxyadenosine + L-methionine + A + H(+). It functions in the pathway cofactor biosynthesis; molybdopterin biosynthesis. Functionally, catalyzes the cyclization of GTP to (8S)-3',8-cyclo-7,8-dihydroguanosine 5'-triphosphate. This is GTP 3',8-cyclase from Corynebacterium glutamicum (strain R).